The primary structure comprises 391 residues: Formate-dependent phosphoribosylglycinamide formyltransferase (391 aa).

N(1)-(5-phospho-beta-D-ribosyl)glycinamide-binding positions include E20–L21 and E80. ATP is bound by residues R112, K153, S158–Q163, E193–V196, and E201. Positions R117–T306 constitute an ATP-grasp domain. Residues E265 and E277 each contribute to the Mg(2+) site. N(1)-(5-phospho-beta-D-ribosyl)glycinamide-binding positions include D284, K354, and R361–R362.

It belongs to the PurK/PurT family. Homodimer.

It catalyses the reaction N(1)-(5-phospho-beta-D-ribosyl)glycinamide + formate + ATP = N(2)-formyl-N(1)-(5-phospho-beta-D-ribosyl)glycinamide + ADP + phosphate + H(+). The protein operates within purine metabolism; IMP biosynthesis via de novo pathway; N(2)-formyl-N(1)-(5-phospho-D-ribosyl)glycinamide from N(1)-(5-phospho-D-ribosyl)glycinamide (formate route): step 1/1. Involved in the de novo purine biosynthesis. Catalyzes the transfer of formate to 5-phospho-ribosyl-glycinamide (GAR), producing 5-phospho-ribosyl-N-formylglycinamide (FGAR). Formate is provided by PurU via hydrolysis of 10-formyl-tetrahydrofolate. This Aliivibrio fischeri (strain ATCC 700601 / ES114) (Vibrio fischeri) protein is Formate-dependent phosphoribosylglycinamide formyltransferase.